A 563-amino-acid polypeptide reads, in one-letter code: GTPase Obg (563 aa).

An Obg domain is found at 2 to 168; it reads SDFVDRVTVH…RDVILELKSI (167 aa). The 181-residue stretch at 169 to 349 folds into the OBG-type G domain; sequence ADVALVGFPS…LNWALADLVT (181 aa). Residues 175–182, 200–204, 221–224, 301–304, and 330–332 each bind GTP; these read GFPSAGKS, FTTLV, DVPG, NKVD, and STA. 2 residues coordinate Mg(2+): serine 182 and threonine 202. The OCT domain maps to 383 to 469; it reads DEGGNALDFT…DRAVEFDWDP (87 aa). The segment at 525–563 is disordered; the sequence is MMAERKAGHWADPSVDDDRHDETSLFGRGETADDEDVEQ.

It belongs to the TRAFAC class OBG-HflX-like GTPase superfamily. OBG GTPase family. In terms of assembly, monomer. Mg(2+) is required as a cofactor.

It localises to the cytoplasm. An essential GTPase which binds GTP, GDP and possibly (p)ppGpp with moderate affinity, with high nucleotide exchange rates and a fairly low GTP hydrolysis rate. Plays a role in control of the cell cycle, stress response, ribosome biogenesis and in those bacteria that undergo differentiation, in morphogenesis control. The polypeptide is GTPase Obg (Bifidobacterium adolescentis (strain ATCC 15703 / DSM 20083 / NCTC 11814 / E194a)).